Here is a 179-residue protein sequence, read N- to C-terminus: Large ribosomal subunit protein uL6 (179 aa).

It belongs to the universal ribosomal protein uL6 family. Part of the 50S ribosomal subunit.

This protein binds to the 23S rRNA, and is important in its secondary structure. It is located near the subunit interface in the base of the L7/L12 stalk, and near the tRNA binding site of the peptidyltransferase center. The polypeptide is Large ribosomal subunit protein uL6 (Mycoplasmopsis pulmonis (strain UAB CTIP) (Mycoplasma pulmonis)).